Here is a 634-residue protein sequence, read N- to C-terminus: MENKWFLLMVRDDFKGGKITLEKALKLLEKLDIQCNTIHVKYIFKDNDRLKQGRITIEEFRTIYRIITYREEIIEIFNTYSENRKILLEKNLVEFLMREQYTLDFNKSIASEIIQKYEPIEEVKQAHQMSFEGFRRYMDSSECLLFDNKCDHVYQDMTHPLTDYFISSSHNTYLISDQLWGPSDLWGYISALVKGCRCLEIDCWDGSQNEPVVYHGYTFTSKLLFKTVIQAINKYAFLASEYPVVLSLENHCSPSQQEVMADSLLATFGDALLSYTLDNFSDRLPSPEALKFKILVRNKKIGTLHETLERKGSDMHGKVEEFEEEEEIEQEEDGSGAKEPEPVGDFQDDLAKEEQLKRVVGIPLFRKKKIKISMALSDLVIYTKVEKFKSFHHSHLYQQFNESNSIGESQARKLTKLAAREFILHTRRFITRVYPKALRADSSNFNPQEFWNVGCQMVALNFQTPGVPMDLQNGKFLDNGCSGYVLKPRFLRDKKTKFNPHKVQIDSNPLTLTIRLISGIQLPPSYQNKADTLVIVEIFGVPNDQMKQQSRVIKKNAFNPRWNETFTFVIQVPELALIRFVAENQGLIAGNEFLGQYTLPVLCMNRGYRRVPLFSKMGESLEPASLFIYVWYIR.

Residues 35–70 (CNTIHVKYIFKDNDRLKQGRITIEEFRTIYRIITYR) form the EF-hand domain. One can recognise a PI-PLC X-box domain in the interval 155-299 (QDMTHPLTDY…LKFKILVRNK (145 aa)). Catalysis depends on residues His-170 and His-215. Residues 312 to 345 (GSDMHGKVEEFEEEEEIEQEEDGSGAKEPEPVGD) are disordered. Residues 321–334 (EFEEEEEIEQEEDG) show a composition bias toward acidic residues. The PI-PLC Y-box domain maps to 376–492 (LSDLVIYTKV…GYVLKPRFLR (117 aa)). The C2 domain occupies 492–615 (RDKKTKFNPH…RGYRRVPLFS (124 aa)).

As to quaternary structure, interacts (via its C2 domain) with PtdIns(3)P and, to a lesser extent, PtdIns(5)P in vitro. The cofactor is Ca(2+).

The protein resides in the nucleus. It is found in the cytoplasm. Its subcellular location is the perinuclear region. The enzyme catalyses a 1,2-diacyl-sn-glycero-3-phospho-(1D-myo-inositol-4,5-bisphosphate) + H2O = 1D-myo-inositol 1,4,5-trisphosphate + a 1,2-diacyl-sn-glycerol + H(+). The production of the second messenger molecules diacylglycerol (DAG) and inositol 1,4,5-trisphosphate (IP3) is mediated by activated phosphatidylinositol-specific phospholipase C enzymes. In vitro, hydrolyzes PtdIns(4,5)P2 in a Ca(2+)-dependent manner. Triggers intracellular Ca(2+) oscillations in oocytes solely during M phase and is involved in inducing oocyte activation and initiating embryonic development up to the blastocyst stage. Is therefore a strong candidate for the egg-activating soluble sperm factor that is transferred from the sperm into the egg cytoplasm following gamete membrane fusion. May exert an inhibitory effect on phospholipase-C-coupled processes that depend on calcium ions and protein kinase C, including CFTR trafficking and function. This chain is 1-phosphatidylinositol 4,5-bisphosphate phosphodiesterase zeta-1, found in Bos taurus (Bovine).